The sequence spans 853 residues: DNA mismatch repair protein MutS (853 aa).

An ATP-binding site is contributed by 614-621 (GPNMGGKS).

Belongs to the DNA mismatch repair MutS family.

Functionally, this protein is involved in the repair of mismatches in DNA. It is possible that it carries out the mismatch recognition step. This protein has a weak ATPase activity. This is DNA mismatch repair protein MutS from Escherichia coli O1:K1 / APEC.